The primary structure comprises 41 residues: QTCASRCPRPCNAGLCCSIYGYCGSGAAYCGAGNCRCQCRG.

Gln1 carries the pyrrolidone carboxylic acid modification. Cystine bridges form between Cys3–Cys17, Cys7–Cys37, Cys11–Cys23, Cys16–Cys30, and Cys35–Cys39. The Chitin-binding type-1 domain maps to Ala4–Gly41.

As to quaternary structure, monomer.

Has antifungal activity against P.infestans, A.lycopersici, V.dahliae, G.zeae, A.nicotianae, F.moniliforme, F.oxysporum and C.gossypii. In Eucommia ulmoides (Hardy rubber tree), this protein is Antifungal peptide 2.